Here is a 143-residue protein sequence, read N- to C-terminus: Transcriptional regulator MraZ (143 aa).

SpoVT-AbrB domains follow at residues 5–47 and 76–119; these read EYQH…PQDE and ATEC…SKER.

It belongs to the MraZ family. In terms of assembly, forms oligomers.

The protein localises to the cytoplasm. Its subcellular location is the nucleoid. This is Transcriptional regulator MraZ from Brevibacillus brevis (strain 47 / JCM 6285 / NBRC 100599).